A 78-amino-acid chain; its full sequence is Defensin-like protein 281 (78 aa).

The N-terminal stretch at 1–23 (MASTKYLVLLFICLSVLLTPGLG) is a signal peptide. 3 disulfide bridges follow: C37–C60, C46–C72, and C50–C74.

It belongs to the DEFL family.

It localises to the secreted. The chain is Defensin-like protein 281 from Arabidopsis thaliana (Mouse-ear cress).